The sequence spans 53 residues: UPF0391 membrane protein gsr2640 (53 aa).

The next 2 membrane-spanning stretches (helical) occupy residues 4 to 24 and 32 to 49; these read LLWLVVVLMVIAALLGFGGVV and WFLIVAAVVLAVVGFVTG.

It belongs to the UPF0391 family.

Its subcellular location is the cell membrane. The protein is UPF0391 membrane protein gsr2640 of Gloeobacter violaceus (strain ATCC 29082 / PCC 7421).